We begin with the raw amino-acid sequence, 602 residues long: Sodium-independent sulfate anion transporter (602 aa).

At 1 to 47 (MSPPMSPMKPPKGFAPMSCCWSTETMQKWLPFLGWLPDYTWYALKMD) the chain is on the extracellular side. A helical transmembrane segment spans residues 48-68 (FIAGISVGLTVIPQALAYAEV). A topological domain (cytoplasmic) is located at residue Ala-69. Residues 70–90 (GLPPQYGLYSAFMGCFVYFFL) traverse the membrane as a helical segment. Residues 91 to 115 (GTSRDVTLGPTAIMSLLVSFYTFHE) lie on the Extracellular side of the membrane. Residues 116-136 (PAYAVLLAFLTGCIQLGMGFL) form a helical membrane-spanning segment. Residues 137–143 (RLGLLLD) are Cytoplasmic-facing. Residues 144–164 (FISCPVIKGFTSAAAIIIGFG) form a helical membrane-spanning segment. Residues 165–193 (QIKNLLGLQHIPRQFFLQVYYTFHNIGET) lie on the Extracellular side of the membrane. The chain crosses the membrane as a helical span at residues 194–214 (RVGDAVLGLVCMVLLLVLKLM). Topologically, residues 215-246 (RDHVPPVHPEMPTGVRLSHGLVWTATTARNAL) are cytoplasmic. A helical membrane pass occupies residues 247–267 (VVSFAALVAYSFQVTGYQPFV). The Extracellular portion of the chain corresponds to 268 to 300 (LTGKTPEGLPDAHIPPFSVTTANGTISFTEMVQ). The chain crosses the membrane as a helical span at residues 301-321 (GMGAGLVVVPLMGLLESIAVA). The Cytoplasmic segment spans residues 322–337 (KSFASQNNYRINSNQE). Residues 338-358 (LLALGFTNILGSLFSSYPVTG) form a helical membrane-spanning segment. Residues 359-370 (SFGRTAVNAQSG) are Extracellular-facing. A helical membrane pass occupies residues 371 to 391 (VCTPAGGLMTGALVLLSLDYL). The Cytoplasmic portion of the chain corresponds to 392–394 (TSL). The helical transmembrane segment at 395–415 (FYYIPKSALAAVIIMAVVPLF) threads the bilayer. At 416–438 (DTKIVKTLWRVKRLDLLPLCVTF) the chain is on the extracellular side. The chain crosses the membrane as a helical span at residues 439–459 (LLCFWEVQYGILAGTLVSVLI). Topologically, residues 460 to 602 (LLHSVARPKI…PEHKIALLKA (143 aa)) are cytoplasmic. Residues 466 to 580 (RPKIQVSEGP…EAEKYLKQEP (115 aa)) form the STAS domain.

The protein belongs to the SLC26A/SulP transporter (TC 2.A.53) family.

It localises to the cell membrane. It is found in the lysosome membrane. Its subcellular location is the apical cell membrane. The protein localises to the basolateral cell membrane. The catalysed reaction is hydrogencarbonate(in) + chloride(out) = hydrogencarbonate(out) + chloride(in). It catalyses the reaction sulfate(in) + H(+)(in) = sulfate(out) + H(+)(out). The enzyme catalyses oxalate(in) + chloride(out) = oxalate(out) + chloride(in). Its function is as follows. Sodium-independent anion exchanger mediating bicarbonate, chloride, sulfate and oxalate transport. Exhibits sodium-independent sulfate anion transporter activity that may cooperate with SLC26A2 to mediate DIDS-sensitive sulfate uptake into high endothelial venules endothelial cells (HEVEC). In the kidney, mediates chloride-bicarbonate exchange, facilitating V-ATPase-mediated acid secretion. May function as a chloride channel, playing an important role in moderating chloride homeostasis and neuronal activity in the cerebellum. The polypeptide is Sodium-independent sulfate anion transporter (Bos taurus (Bovine)).